We begin with the raw amino-acid sequence, 270 residues long: Diaminopimelate epimerase (270 aa).

The substrate site is built by N15, Q49, and N66. C75 acts as the Proton donor in catalysis. Substrate-binding positions include 76–77 (GN), N155, N187, and 204–205 (ER). C213 serves as the catalytic Proton acceptor. Residue 214 to 215 (GS) coordinates substrate.

It belongs to the diaminopimelate epimerase family. As to quaternary structure, homodimer.

The protein resides in the cytoplasm. The enzyme catalyses (2S,6S)-2,6-diaminopimelate = meso-2,6-diaminopimelate. It functions in the pathway amino-acid biosynthesis; L-lysine biosynthesis via DAP pathway; DL-2,6-diaminopimelate from LL-2,6-diaminopimelate: step 1/1. Its function is as follows. Catalyzes the stereoinversion of LL-2,6-diaminopimelate (L,L-DAP) to meso-diaminopimelate (meso-DAP), a precursor of L-lysine and an essential component of the bacterial peptidoglycan. The polypeptide is Diaminopimelate epimerase (Rickettsia africae (strain ESF-5)).